The primary structure comprises 96 residues: Secretoglobin family 2B member 2 (96 aa).

Residues M1 to A23 form the signal peptide.

It belongs to the secretoglobin family.

Its subcellular location is the secreted. The chain is Secretoglobin family 2B member 2 (SCGB2B2) from Homo sapiens (Human).